A 395-amino-acid chain; its full sequence is Leucine aminopeptidase 1 (395 aa).

The first 19 residues, 1–19 (MKHLSLLALAAVAPTTALA), serve as a signal peptide directing secretion. Positions 20-95 (GVIDHQQVTF…SVKSFEQTKV (76 aa)) are excised as a propeptide. Asn187 carries an N-linked (GlcNAc...) asparagine glycan. Zn(2+) is bound by residues His195, Asp214, Glu253, and Asp280. Residues Cys329 and Cys333 are joined by a disulfide bond. His362 is a binding site for Zn(2+).

It belongs to the peptidase M28 family. M28E subfamily. In terms of assembly, monomer. The cofactor is Zn(2+).

The protein localises to the secreted. Functionally, extracellular aminopeptidase that allows assimilation of proteinaceous substrates. This is Leucine aminopeptidase 1 (LAP1) from Uncinocarpus reesii (strain UAMH 1704).